The primary structure comprises 337 residues: Ornithine carbamoyltransferase (337 aa).

Carbamoyl phosphate-binding positions include 57–60 (STRT), Gln-84, Arg-108, and 135–138 (HPTQ). L-ornithine-binding positions include Asn-167, Asp-231, and 235–236 (SM). Residues 272 to 273 (CL) and Arg-317 each bind carbamoyl phosphate.

This sequence belongs to the aspartate/ornithine carbamoyltransferase superfamily. OTCase family.

The protein resides in the cytoplasm. It catalyses the reaction carbamoyl phosphate + L-ornithine = L-citrulline + phosphate + H(+). It participates in amino-acid degradation; L-arginine degradation via ADI pathway; carbamoyl phosphate from L-arginine: step 2/2. In terms of biological role, reversibly catalyzes the transfer of the carbamoyl group from carbamoyl phosphate (CP) to the N(epsilon) atom of ornithine (ORN) to produce L-citrulline. The polypeptide is Ornithine carbamoyltransferase (Streptococcus uberis (strain ATCC BAA-854 / 0140J)).